The sequence spans 212 residues: uncharacterized protein (212 aa).

The segment at 42–101 (GITGPKATKSPSRRTTRSPSPSRRTTRSSPSRRTTRSSPSRRTTRSPSPSGRRKQGGPAV) is disordered. Over residues 58 to 91 (RSPSPSRRTTRSSPSRRTTRSSPSRRTTRSPSPS) the composition is skewed to low complexity.

Belongs to the IIV-6 378R family.

This is an uncharacterized protein from Invertebrate iridescent virus 3 (IIV-3).